Reading from the N-terminus, the 495-residue chain is Cysteine--tRNA ligase (495 aa).

Cys-29 contributes to the Zn(2+) binding site. Positions 31-41 (PTVYDYGHIGN) match the 'HIGH' region motif. 3 residues coordinate Zn(2+): Cys-211, His-236, and Glu-240. The 'KMSKS' region signature appears at 268-272 (KMSKS). Lys-271 lines the ATP pocket.

This sequence belongs to the class-I aminoacyl-tRNA synthetase family. As to quaternary structure, monomer. It depends on Zn(2+) as a cofactor.

Its subcellular location is the cytoplasm. The enzyme catalyses tRNA(Cys) + L-cysteine + ATP = L-cysteinyl-tRNA(Cys) + AMP + diphosphate. The sequence is that of Cysteine--tRNA ligase from Koribacter versatilis (strain Ellin345).